Reading from the N-terminus, the 488-residue chain is MRKKLAKVKVHIQSLDSLLSSMTMPIIGIFIAWGLLASFFIPSGWTPDKNLALMVGIGIQYVIPTIIXFFGGKKIYEIRGGVIAVIIAIAVIAAGQTEAFTKIVGQKSVMFLGVMIFGPIAALILKHTEKFWIHRIKSGFEMLVNNFYLGFLGFALIFPSFYLSIYLIGYIQLGLKLLVEIMQQYKLYPIAAIVIEPAKVLFLNNAINHGVLTPLGLQQVRDSGKSILFLLESNPGPGLGLLVAFLIFFFKRDKKLSSNAASSSPIHLFGGIHEVYFPFVLLKPVLILATIAVGVVGNGILQIFNAGTIAPVSPGSVIAGFLQINKTPLDVAGYALALVLSAVTSLLISLLLLSLTRKKQLKTLQEAQAQVAEMKQTPAKKPRQKDTPAIATKIDFSQVTFVCDAGMGSSTMGAAIFRKELKNQNIEDITVINKAIVDLKDEKVIITISQLYDRVKAKRADATIYTINQFLDKQGYLTIIEKIKNEKN.

Residues 1-26 are Cytoplasmic-facing; it reads MRKKLAKVKVHIQSLDSLLSSMTMPI. The PTS EIIC type-2 domain occupies 15–362; it reads LDSLLSSMTM…LSLTRKKQLK (348 aa). The chain crosses the membrane as a helical span at residues 27-48; that stretch reads IGIFIAWGLLASFFIPSGWTPD. Residues 49–52 lie on the Extracellular side of the membrane; that stretch reads KNLA. Residues 53 to 73 form a helical membrane-spanning segment; it reads LMVGIGIQYVIPTIIXFFGGK. Residues 74–147 are Cytoplasmic-facing; the sequence is KIYEIRGGVI…SGFEMLVNNF (74 aa). Residues 148-169 form a helical membrane-spanning segment; that stretch reads YLGFLGFALIFPSFYLSIYLIG. Residues 170-178 are Extracellular-facing; that stretch reads YIQLGLKLL. The helical transmembrane segment at 179 to 199 threads the bilayer; sequence VEIMQQYKLYPIAAIVIEPAK. The Cytoplasmic portion of the chain corresponds to 200 to 289; sequence VLFLNNAINH…VLLKPVLILA (90 aa). Residues 290 to 309 traverse the membrane as a helical segment; that stretch reads TIAVGVVGNGILQIFNAGTI. Residues 310 to 331 lie on the Extracellular side of the membrane; that stretch reads APVSPGSVIAGFLQINKTPLDV. The helical transmembrane segment at 332–353 threads the bilayer; that stretch reads AGYALALVLSAVTSLLISLLLL. Topologically, residues 354 to 488 are cytoplasmic; sequence SLTRKKQLKT…IIEKIKNEKN (135 aa). In terms of domain architecture, PTS EIIB type-2 spans 397-488; the sequence is SQVTFVCDAG…IIEKIKNEKN (92 aa). The active-site Phosphocysteine intermediate; for EIIB activity is C403. C403 is subject to Phosphocysteine; by EIIA.

In terms of assembly, homodimer.

Its subcellular location is the cell membrane. It catalyses the reaction D-mannitol(out) + N(pros)-phospho-L-histidyl-[protein] = D-mannitol 1-phosphate(in) + L-histidyl-[protein]. In terms of biological role, the phosphoenolpyruvate-dependent sugar phosphotransferase system (sugar PTS), a major carbohydrate active transport system, catalyzes the phosphorylation of incoming sugar substrates concomitantly with their translocation across the cell membrane. The enzyme II CmtAB PTS system is involved in D-mannitol transport. This is PTS system mannitol-specific EIICB component (mtlA) from Mycoplasma pneumoniae (strain ATCC 29342 / M129 / Subtype 1) (Mycoplasmoides pneumoniae).